The chain runs to 872 residues: DNA mismatch repair protein MutS (872 aa).

Over residues 1–17 (MSISKIESVNAEKQSPV) the composition is skewed to polar residues. The tract at residues 1–22 (MSISKIESVNAEKQSPVGTEIG) is disordered. ATP is bound at residue 632–639 (GPNMGGKS).

Belongs to the DNA mismatch repair MutS family.

In terms of biological role, this protein is involved in the repair of mismatches in DNA. It is possible that it carries out the mismatch recognition step. This protein has a weak ATPase activity. In Azoarcus sp. (strain BH72), this protein is DNA mismatch repair protein MutS.